The sequence spans 303 residues: CDAN1-interacting nuclease 1 (303 aa).

It is found in the nucleus. Its subcellular location is the cytoplasm. In terms of biological role, may play a role in erythroid cell differentiation. In Xenopus laevis (African clawed frog), this protein is CDAN1-interacting nuclease 1.